Consider the following 1076-residue polypeptide: Structural maintenance of chromosomes protein 5 (1076 aa).

Position 49–56 (49–56 (GHNGSGKS)) interacts with ATP. The stretch at 190–415 (STSIEDKCTT…KRDEEQNSQL (226 aa)) forms a coiled coil. Over residues 375–410 (EQKYSTAERDSRQEEDAIQKKSYEMRQLENKKRDEE) the composition is skewed to basic and acidic residues. The segment at 375–420 (EQKYSTAERDSRQEEDAIQKKSYEMRQLENKKRDEEQNSQLNRQDR) is disordered. Residues 416 to 617 (NRQDRYRVLQ…ANTWRDQFFK (202 aa)) form a flexible hinge region. Coiled coils occupy residues 627 to 713 (NSIL…EKKA) and 749 to 786 (KSRV…ALNH).

It belongs to the SMC family. SMC5 subfamily. As to quaternary structure, interacts with smc-6. In terms of tissue distribution, expressed in the germline (at protein level).

It is found in the nucleus. Its subcellular location is the chromosome. Core component of the smc-5/smc-6 complex. Functions in DNA double strand break repair by promoting sister-chromatid homologous recombination during meiosis. Acts in a DNA repair pathway for removal of ionizing radiation- and ultraviolet (UV) radiation-induced DNA lesions that is distinct from classical nucleotide excision repair and the translesion synthesis pathway. Also involved in the recovery of stalled replication forks. This chain is Structural maintenance of chromosomes protein 5, found in Caenorhabditis elegans.